The following is a 296-amino-acid chain: uncharacterized protein (296 aa).

Positions 129 to 170 (VKELKDLIRTVADEHMKMKREHEAAMKELTLLINNQKQQQQQ) form a coiled coil. A disordered region spans residues 165–187 (KQQQQQPVPMPRNSTATRPKNLA).

This is an uncharacterized protein from Ostreid herpesvirus 1 (isolate France) (OsHV-1).